Consider the following 343-residue polypeptide: MSDRQAALDMALKQIEKQFGKGSIMKLGEQAERKVSTVSSGSLALDVALGVGGYPRGRIIEIYGPESSGKTTVSLHAIAEVQRQGGQAAFIDAEHAMDPVYAQKLGVNIDELLLSQPDTGEQGLEIAEALVRSGAVDIIVIDSVAALVPKAEIEGDMGDSHVGLQARLMSQALRKLSGAINKSKTIAIFINQIREKVGVMFGNPETTPGGRALKFYSTVRLEVRRAEQLKQGNDIVGNKTKVKVVKNKVAPPFRVAEVDIMYGEGISREGEILDMASELDIVQKSGAWYSYNEERLGQGRENSKQFLKENTDLREEIAFFIREHHGISEDSGAEGMEDPNLLD.

64-71 (GPESSGKT) serves as a coordination point for ATP.

Belongs to the RecA family.

It is found in the cytoplasm. Functionally, can catalyze the hydrolysis of ATP in the presence of single-stranded DNA, the ATP-dependent uptake of single-stranded DNA by duplex DNA, and the ATP-dependent hybridization of homologous single-stranded DNAs. It interacts with LexA causing its activation and leading to its autocatalytic cleavage. This is Protein RecA from Bacillus thuringiensis (strain Al Hakam).